The sequence spans 845 residues: Disintegrin and metalloproteinase domain-containing protein 9 (845 aa).

The signal sequence occupies residues 1–29 (MGPRALSPLASLRLRWLLACGLLGPVLEA). Residues 30–697 (GRPDLEQTVH…YNAKSTALRD (668 aa)) are Extracellular-facing. Residues asparagine 144, asparagine 154, and asparagine 231 are each glycosylated (N-linked (GlcNAc...) asparagine). Residues 212–406 (RYVELFIVVD…KGGSCLLNIP (195 aa)) enclose the Peptidase M12B domain. Cystine bridges form between cysteine 322/cysteine 401, cysteine 363/cysteine 385, cysteine 365/cysteine 370, and cysteine 473/cysteine 493. Histidine 347 is a Zn(2+) binding site. The active site involves glutamate 348. Histidine 351 and histidine 357 together coordinate Zn(2+). 3 N-linked (GlcNAc...) asparagine glycosylation sites follow: asparagine 381, asparagine 487, and asparagine 636. Residues 414-501 (APSCGNKLVD…FCPPDVFIQN (88 aa)) enclose the Disintegrin domain. 3 disulfides stabilise this stretch: cysteine 644-cysteine 656, cysteine 650-cysteine 662, and cysteine 664-cysteine 673. Positions 644–698 (CDIQGKCHGHGVCNSNKNCHCEDGWAPPHCDTKGYGGSVDSGPTYNAKSTALRDG) constitute an EGF-like domain. A helical transmembrane segment spans residues 698 to 718 (GLLVFFFLIVPLVAAAIFLFI). Over 719–845 (KRDELRKTFR…PAPPLYSSLT (127 aa)) the chain is Cytoplasmic. The disordered stretch occupies residues 729–845 (KKRSQMSDGR…PAPPLYSSLT (117 aa)). The span at 734-745 (MSDGRNQANVSR) shows a compositional bias: polar residues. Over residues 783 to 794 (PGGPGVSRPPPG) the composition is skewed to pro residues.

As to quaternary structure, interacts with SH3GL2 and SNX9 through its cytoplasmic tail. Interacts with ITGA6. The cofactor is Zn(2+). Post-translationally, proteolytically cleaved in the trans-Golgi network before it reaches the plasma membrane to generate a mature protein. The removal of the pro-domain occurs via cleavage at two different sites. Processed most likely by a pro-protein convertase such as furin, at the boundary between the pro-domain and the catalytic domain. An additional upstream cleavage pro-protein convertase site (Arg-56/Glu-57) has an important role in the activation of ADAM9. In terms of processing, phosphorylation is induced in vitro by phorbol-12-myristate-13-acetate (PMA).

It localises to the cell membrane. Its activity is regulated as follows. Synthesized as an inactive form which is proteolytically cleaved to generate an active enzyme. Processing at the upstream site is particularly important for activation of the proenzyme, whereas processing at the boundary between the pro-domain and the catalytic domain does not appear to be essential. Inhibited by hydroxamic acid-based inhibitors. Its function is as follows. Metalloprotease that cleaves and releases a number of molecules with important roles in tumorigenesis and angiogenesis, such as TEK, KDR, EPHB4, CD40, VCAM1 and CDH5. May mediate cell-cell, cell-matrix interactions and regulate the motility of cells via interactions with integrins. The chain is Disintegrin and metalloproteinase domain-containing protein 9 from Mus musculus (Mouse).